We begin with the raw amino-acid sequence, 41 residues long: Plantazolicin (41 aa).

A propeptide spanning residues 1 to 27 (MTKITIPTALSAKVHGEGQHLFEPMAA) is cleaved from the precursor. Arginine 28 is subject to N2,N2-dimethylarginine; in form plantazolicin A. The thiazole-4-carboxylic acid (Arg-Cys) cross-link spans 28–29 (RC). 2 consecutive cross-links (5-methyloxazole-4-carboxylic acid (Cys-Thr)) follow at residues 29 to 30 (CT) and 31 to 32 (CT). Positions 30–31 (TC) form a cross-link, thiazole-4-carboxylic acid (Thr-Cys). The 5-methyloxazole-4-carboxylic acid (Thr-Thr) cross-link spans 32–33 (TT). The segment at residues 35-36 (IS) is a cross-link (oxazole-4-carboxylic acid (Ile-Ser)). 3 cross-links (oxazole-4-carboxylic acid (Ser-Ser)) span residues 36–37 (SS), 37–38 (SS), and 38–39 (SS). The segment at residues 39–40 (ST) is a cross-link (5-methyloxazoline-4-carboxylic acid (Ser-Thr)).

In terms of processing, maturation of thiazole and oxazole containing antibiotics involves the enzymatic condensation of a Cys, Ser or Thr with the alpha-carbonyl of the preceding amino acid to form a thioether or ether bond, then dehydration to form a double bond with the alpha-amino nitrogen. Thiazoline or oxazoline ring are dehydrogenated to form thiazole or oxazole rings.

The protein resides in the secreted. It is found in the cell wall. Functionally, peptide antibiotic inhibiting growth of Gram-positive bacteria. The mode of action appears to be disruption of cell walls and lysis of cells. The chain is Plantazolicin from Bacillus pumilus (strain ATCC 7061 / DSM 27 / CCUG 26015 / JCM 2508 / NBRC 12092 / NCIMB 9369 / NCTC 10337 / NRRL NRS-272 / CCM 2144).